The following is a 1230-amino-acid chain: MSLLSRFFYKRPPDGLLEFADRVYVFDSCFCTEVLADSLYQIFLHEVINDLHEEFPESSFLAFNFREGEKKSVFAETLCEYDVTVLEYPRQYEGCPMLPLSLIQHFLRVCESWLARGNRQDVILLHCERGGWPLLAFILASFLIFRKVHSGERRTLEIVHREAPKGLLQLLSPLNPFPSQLRYLQYVARRNINSEWPPPERALSLDCVIIRGIPNFDSQHGCRPIIRIFGRNYSSKSGLSTEMVYSMSDKKKPLRHYRQAECDVIKIDIQCWVQGDVVLECVHMDLDPEREVMMFRVMFNTAFIRSNILMLNSDNLDILWEAKDHYPKGFRAEVLFGEVENASPQKVPTPIVNGDETGGLPIEAFSRVQELFSGVDLAENGDDAALWLLKQLAAINDAKEFTRFRHKGSFYFNSPDSEEETNTSSAADSSDEGFEAIQRPRIHIPFDNDDTDDITLSVAHESSEEPHEFSHHHHHEIPAKDSVDNPLNLPSDPPSSGDHVTLLPPPPPPPPPPLFTSTTSFSPSQPPPPPPPPPLFMSTTSFSPSQPPPPPPPPPLFTSTTSFSPSQPPPPPPLPSFSNRDPLTTLHQPINKTPPPPPPPPPPLPSRSIPPPLAQPPPPRPPPPPPPPPSSRSIPSPSAPPPPPPPPPSFGSTGNKRQAQPPPPPPPPPPTRIPAAKCAPPPPPPPPTSHSGSIRVGPPSTPPPPPPPPPKANISNAPKPPAPPPLPPSSTRLGAPPPPPPPPLSKTPAPPPPPLSKTPVPPPPPGLGRGTSSGPPPLGAKGSNAPPPPPPAGRGRASLGLGRGRGVSVPTAAPKKTALKPLHWSKVTRAAKGSLWADTQKQENQPRAPEIDISELESLFSAVSDTTAKKSTGRRGSSISKPEKVQLVDLRRANNCEIMLTKIKIPLPDMLSAVLALDSLALDIDQVENLIKFCPTKEEMELLRNYTGDKEMLGKCEQFFMELMKVPRIEAKLRVFGFKITFASQVEELKSCLNTINAATKEVKESAKLRQIMQTILTLGNALNQGTARGSAVGFKLDSLLKLSDTRARNNKMTLMHYLCKLVGEKMPELLDFANDLVHLEAASKIELKTLAEEMQAATKGLEKVEQELMASENDGAISLGFRKVLKEFLDMADEEVKTLASLYSEVGRNADSLSHYFGEDPARCPFEQVTKILTLFMKTFIKSREENEKQAEAEKKKLEKEAIKEKSATKKDGVDNDNDLIQQIHRHRT.

The region spanning 1–194 (MSLLSRFFYK…QYVARRNINS (194 aa)) is the Phosphatase tensin-type domain. Catalysis depends on Cys-127, which acts as the Phosphocysteine intermediate. In terms of domain architecture, C2 tensin-type spans 200-339 (ERALSLDCVI…FRAEVLFGEV (140 aa)). Disordered stretches follow at residues 412–432 (FNSP…SSDE), 460–822 (HESS…LKPL), and 1187–1230 (ENEK…RHRT). The segment covering 484–496 (DNPLNLPSDPPSS) has biased composition (low complexity). Pro residues-rich tracts occupy residues 503-514 (LPPPPPPPPPPL), 524-535 (SQPPPPPPPPPL), 545-556 (SQPPPPPPPPPL), and 566-575 (SQPPPPPPLP). Positions 579 to 591 (NRDPLTTLHQPIN) are enriched in polar residues. Pro residues-rich tracts occupy residues 592–630 (KTPP…PPPS), 637–649 (PSAP…PPPS), 660–672 (QPPP…PPTR), 679–688 (APPPPPPPPT), 699–711 (PSTP…PPPK), 718–728 (PKPPAPPPLPP), and 735–766 (APPP…PPPG). An FH2 domain is found at 809 to 1207 (VPTAAPKKTA…KLEKEAIKEK (399 aa)). Over residues 1187–1215 (ENEKQAEAEKKKLEKEAIKEKSATKKDGV) the composition is skewed to basic and acidic residues.

It belongs to the formin-like family. Class-II subfamily.

The sequence is that of Formin-like protein 14 (FH14) from Arabidopsis thaliana (Mouse-ear cress).